The sequence spans 595 residues: Laccase-18 (595 aa).

The N-terminal stretch at 1–29 (MEKLSTAASLFCVVVAATALAMAVVGGEA) is a signal peptide. 2 consecutive Plastocyanin-like domains span residues 37–153 (MVHE…PRNG) and 162–316 (KDVP…YAGA). 2 N-linked (GlcNAc...) asparagine glycosylation sites follow: asparagine 42 and asparagine 48. Histidine 87 and histidine 89 together coordinate Cu cation. An N-linked (GlcNAc...) asparagine glycan is attached at asparagine 121. 2 residues coordinate Cu cation: histidine 132 and histidine 134. 7 N-linked (GlcNAc...) asparagine glycosylation sites follow: asparagine 206, asparagine 345, asparagine 382, asparagine 402, asparagine 409, asparagine 439, and asparagine 470. The region spanning 429 to 571 (DFPVRPPRPF…ATAFIVEDGP (143 aa)) is the Plastocyanin-like 3 domain. Cu cation-binding residues include asparagine 488, histidine 491, histidine 493, histidine 550, cysteine 551, histidine 552, histidine 556, and methionine 561. A disordered region spans residues 570 to 595 (GPTPETSLPPPPPEFKRCGTNGLSQP).

Belongs to the multicopper oxidase family. It depends on Cu cation as a cofactor.

The protein resides in the secreted. The protein localises to the extracellular space. Its subcellular location is the apoplast. The enzyme catalyses 4 hydroquinone + O2 = 4 benzosemiquinone + 2 H2O. Functionally, lignin degradation and detoxification of lignin-derived products. This is Laccase-18 (LAC18) from Oryza sativa subsp. japonica (Rice).